We begin with the raw amino-acid sequence, 215 residues long: Small ribosomal subunit protein uS7 (215 aa).

It belongs to the universal ribosomal protein uS7 family. Part of the 30S ribosomal subunit.

Its function is as follows. One of the primary rRNA binding proteins, it binds directly to 16S rRNA where it nucleates assembly of the head domain of the 30S subunit. Is located at the subunit interface close to the decoding center. The polypeptide is Small ribosomal subunit protein uS7 (Thermococcus celer).